Reading from the N-terminus, the 306-residue chain is Esterase tropF (306 aa).

Catalysis depends on charge relay system residues Ser-147, Asp-248, and His-276.

Belongs to the LovG family.

It functions in the pathway secondary metabolite biosynthesis. In terms of biological role, esterase; part of the gene cluster that mediates the biosynthesis of the tropolone class of fungal maleic anhydrides. The pathway begins with the synthesis of 3-methylorcinaldehyde by the non-reducing polyketide synthase (PKS) tropA. 3-methylorcinaldehyde is the substrate for the FAD-dependent monooxygenase tropB to yield a dearomatized hydroxycyclohexadione. The 2-oxoglutarate-dependent dioxygenase tropC then performs the oxidative ring expansion to provide the first tropolone metabolite stipitaldehyde. Trop D converts stipitaldehyde into stipitacetal which is in turn converted to stipitalide by the short-chain dehydrogenase/reductase tropE. The next steps involve tropF, tropG, tropH, tropI and tropJ to form successive tropolone maleic anhydrides including stipitaldehydic, stipitatonic and stipitatic acids. This chain is Esterase tropF, found in Talaromyces stipitatus (strain ATCC 10500 / CBS 375.48 / QM 6759 / NRRL 1006) (Penicillium stipitatum).